Reading from the N-terminus, the 68-residue chain is Cell division protein ZapB (68 aa).

Positions 3-58 (LELLSKLETKIQAALETIELLKMELEEEKQKNHTLNEQNQQLSQDLTSWNEKVTGL) form a coiled coil.

It belongs to the ZapB family. Homodimer. The ends of the coiled-coil dimer bind to each other, forming polymers. Interacts with FtsZ.

It localises to the cytoplasm. Its function is as follows. Non-essential, abundant cell division factor that is required for proper Z-ring formation. It is recruited early to the divisome by direct interaction with FtsZ, stimulating Z-ring assembly and thereby promoting cell division earlier in the cell cycle. Its recruitment to the Z-ring requires functional FtsA or ZipA. The polypeptide is Cell division protein ZapB (Shewanella loihica (strain ATCC BAA-1088 / PV-4)).